A 445-amino-acid chain; its full sequence is POU domain, class 5, transcription factor 1.2 (445 aa).

2 stretches are compositionally biased toward polar residues: residues 76–88 and 164–182; these read SANQLGISGQGNP and IFTSSPDKSGESGISSLDN. Disordered stretches follow at residues 76–116 and 139–227; these read SANQ…PSLP and TTVV…GEME. Positions 183–200 are enriched in low complexity; it reads SRCSSATSSSSGGTNVGT. The 75-residue stretch at 218 to 292 folds into the POU-specific domain; that stretch reads EEAPNSGEME…LLRSWLHEVE (75 aa). Residues 312-371 constitute a DNA-binding region (homeobox); the sequence is KRKHRTSIENNVKCTLENYFMQCSKPSAQEIAQIARELNMEKDVVRVWFCNRRQKGKRQV.

It belongs to the POU transcription factor family. Class-5 subfamily. Interacts with the transcription factors tcf7l1/tcf3 and vegt. As to expression, initially (stage 9) expressed in all regions of the embryo, becoming localized to the ventroposterior regions by early neurula stages. In adults, expressed at a low level in the brain.

The protein localises to the nucleus. Its function is as follows. Transcription factor that binds to the octamer motif (5'-ATTTGCAT-3'). Antagonizes the activity of nodal/activin signaling during gastrulation to suppress mesendoderm formation. This is POU domain, class 5, transcription factor 1.2 (pou5f1.2) from Xenopus laevis (African clawed frog).